The chain runs to 221 residues: MTADTQIPRATAQRLPIYYYYLSSLHEAGIKRINSTEISEAIKFDAATVRRDFSYFGALGKRGFGYDVSALLDFFSKVLSQDKLNKVAVVGTGNLGQALMKYNFVHSSNIQIVMGFDVDPKKKELKIDNEKGETIPVYSIGDLKSELNKENVTIAILTVPGKSAQEVTDQLVDAGIKGILNFSPIRITVPNSVRVQNVDLTTGMQTLIYFVDNFENIKSAK.

Residues Ile-17 to Phe-56 constitute a DNA-binding region (H-T-H motif). An NAD(+)-binding site is contributed by Gly-91 to Gly-96.

Belongs to the transcriptional regulatory Rex family. Homodimer.

It localises to the cytoplasm. Modulates transcription in response to changes in cellular NADH/NAD(+) redox state. This is Redox-sensing transcriptional repressor Rex from Oenococcus oeni (strain ATCC BAA-331 / PSU-1).